A 439-amino-acid polypeptide reads, in one-letter code: Tol-Pal system protein TolB (439 aa).

The signal sequence occupies residues 1-22; it reads MKKPLRWLAALTVLLLPLSALA.

This sequence belongs to the TolB family. The Tol-Pal system is composed of five core proteins: the inner membrane proteins TolA, TolQ and TolR, the periplasmic protein TolB and the outer membrane protein Pal. They form a network linking the inner and outer membranes and the peptidoglycan layer.

The protein localises to the periplasm. Part of the Tol-Pal system, which plays a role in outer membrane invagination during cell division and is important for maintaining outer membrane integrity. This is Tol-Pal system protein TolB from Xanthomonas oryzae pv. oryzae (strain PXO99A).